Consider the following 485-residue polypeptide: Palmitoyltransferase ZDHHC1 (485 aa).

Positions 1–41 are disordered; the sequence is MYKMNICNKPSNKTAPEKSVWTAPAQPSGPSPELQGQRSRR. Topologically, residues 1–52 are cytoplasmic; it reads MYKMNICNKPSNKTAPEKSVWTAPAQPSGPSPELQGQRSRRNGWSWPPHPLQ. The mediates interaction with STING1 stretch occupies residues 1 to 271; sequence MYKMNICNKP…GHLLCFHIYL (271 aa). Residues 53–73 form a helical membrane-spanning segment; the sequence is IVAWLLYLFFAVIGFGILVPL. Residues 74 to 77 are Lumenal-facing; sequence LPHH. Residues 78–98 form a helical membrane-spanning segment; that stretch reads WVPAGYACMGAIFAGHLVVHL. Topologically, residues 99–185 are cytoplasmic; the sequence is TAVSIDPADA…YRLFLHSVAS (87 aa). A DHHC domain is found at 134-184; that stretch reads LHCNLCNVDVSARSKHCSACNKCVCGFDHHCKWLNNCVGERNYRLFLHSVA. Residue Cys164 is the S-palmitoyl cysteine intermediate of the active site. Residues 186–206 form a helical membrane-spanning segment; the sequence is ALLGVLLLVLVATYVFVEFFV. The Lumenal portion of the chain corresponds to 207–241; the sequence is NPMRLRTNRHFEVLKNHTDVWFVFLPAAPVETQAP. Residues 242-262 form a helical membrane-spanning segment; it reads AILALAALLILLGLLSTALLG. Residues 263–485 lie on the Cytoplasmic side of the membrane; that stretch reads HLLCFHIYLM…RGRRVRPPFS (223 aa). 2 disordered regions span residues 324-358 and 462-485; these read EPPGQAGPAAVNAKHSRPASPDPTPGRRDCAGPPV and LWPPRGAGADSPRWRGRRVRPPFS. Basic residues predominate over residues 475-485; the sequence is WRGRRVRPPFS.

The protein belongs to the DHHC palmitoyltransferase family. Interacts with STING1; ZDHHC1 constitutively interacts with STING1 and in presence of DNA viruses activates it by promoting its cGAMP-induced oligomerization and the recruitment of downstream signaling components. As to expression, widely expressed with significant expression in heart, brain, placenta, lung, liver, kidney, testis, thymus and small intestine. Expressed at lower levels in adult pancreas and lung.

It is found in the endosome membrane. Its subcellular location is the endoplasmic reticulum membrane. The protein resides in the golgi apparatus. The catalysed reaction is L-cysteinyl-[protein] + hexadecanoyl-CoA = S-hexadecanoyl-L-cysteinyl-[protein] + CoA. Functionally, palmitoyltransferase that catalyzes the addition of palmitate onto various protein substrates, such as NCDN and NLRP3. Has a palmitoyltransferase activity toward NCDN and regulates NCDN association with endosome membranes through this palmitoylation. Acts as an activator of the NLRP3 inflammasome by mediating palmitoylation of 'Cys-130' and 'Cys-958' of NLRP3, thereby promoting NLRP3 phosphorylation and activation by NEK7. In terms of biological role, also has a palmitoyltransferase activity-independent function in DNA virus-triggered and CGAS-mediated innate immune response. Functions as an activator of STING1 by promoting its cGAMP-induced oligomerization and the recruitment of downstream signaling components. The chain is Palmitoyltransferase ZDHHC1 from Homo sapiens (Human).